We begin with the raw amino-acid sequence, 84 residues long: Small ribosomal subunit protein uS17 (84 aa).

The protein belongs to the universal ribosomal protein uS17 family. Part of the 30S ribosomal subunit.

Its function is as follows. One of the primary rRNA binding proteins, it binds specifically to the 5'-end of 16S ribosomal RNA. In Treponema pallidum (strain Nichols), this protein is Small ribosomal subunit protein uS17.